Reading from the N-terminus, the 207-residue chain is uncharacterized protein (207 aa).

This sequence belongs to the flavoredoxin family. It depends on FMN as a cofactor.

This is an uncharacterized protein from Bacillus subtilis (strain 168).